A 255-amino-acid chain; its full sequence is F-box/SPRY domain-containing protein 1 (255 aa).

The F-box domain maps to 3–51; it reads DPVAALCNYNVLEVIFSYLELDDLSHCSQVCKSWYHFLNDENSDVWRWH. The B30.2/SPRY domain occupies 61–253; the sequence is LKSDLLSSVS…VSMVYLGTPL (193 aa).

This sequence belongs to the FBXO45/Fsn family. As to quaternary structure, component of an E3 ubiquitin ligase complex composed of hiw and Fsn.

The protein localises to the synapse. It participates in protein modification; protein ubiquitination. Functionally, required in the presynaptic motoneuron to down-regulate the levels of wnd and restrain synaptic terminal growth at the neuromuscular junction (NMJ). The chain is F-box/SPRY domain-containing protein 1 from Drosophila simulans (Fruit fly).